Reading from the N-terminus, the 135-residue chain is NADH-quinone oxidoreductase subunit A (135 aa).

A run of 3 helical transmembrane segments spans residues 9-29 (YFPI…LLTV), 67-87 (VGML…WVVV), and 97-117 (LFGF…FFYI).

It belongs to the complex I subunit 3 family. In terms of assembly, NDH-1 is composed of 14 different subunits. Subunits NuoA, H, J, K, L, M, N constitute the membrane sector of the complex.

It localises to the cell inner membrane. The catalysed reaction is a quinone + NADH + 5 H(+)(in) = a quinol + NAD(+) + 4 H(+)(out). NDH-1 shuttles electrons from NADH, via FMN and iron-sulfur (Fe-S) centers, to quinones in the respiratory chain. The immediate electron acceptor for the enzyme in this species is believed to be ubiquinone. Couples the redox reaction to proton translocation (for every two electrons transferred, four hydrogen ions are translocated across the cytoplasmic membrane), and thus conserves the redox energy in a proton gradient. In Solibacter usitatus (strain Ellin6076), this protein is NADH-quinone oxidoreductase subunit A.